Reading from the N-terminus, the 503-residue chain is Maturase K (503 aa).

This sequence belongs to the intron maturase 2 family. MatK subfamily.

The protein resides in the plastid. The protein localises to the chloroplast. Functionally, usually encoded in the trnK tRNA gene intron. Probably assists in splicing its own and other chloroplast group II introns. In Kunzea baxteri (Scarlet kunzea), this protein is Maturase K.